Consider the following 451-residue polypeptide: Secreted RxLR effector protein 70 (451 aa).

Residues 1-17 (MRGAYYIITALLVVASS) form the signal peptide. A RxLR-dEER motif is present at residues 48–65 (RFLRESRDVHDDLANEER). The segment at 303–336 (DAPSNSKHTLGGNKDSSSATTLHKHSKGLSSRPF) is disordered. A compositionally biased stretch (polar residues) spans 305 to 323 (PSNSKHTLGGNKDSSSATT).

This sequence belongs to the RxLR effector family.

The protein localises to the secreted. It is found in the host nucleus. Secreted effector that completely suppresses the host cell death induced by cell death-inducing proteins. This chain is Secreted RxLR effector protein 70, found in Plasmopara viticola (Downy mildew of grapevine).